The sequence spans 388 residues: D-alanyl-D-alanine carboxypeptidase DacD (388 aa).

Positions 1 to 21 (MKRRLIIAASLFVFNLSSGFA) are cleaved as a signal peptide. Serine 63 serves as the catalytic Acyl-ester intermediate. Lysine 66 (proton acceptor) is an active-site residue. Serine 129 is an active-site residue. Lysine 232 serves as a coordination point for substrate.

Belongs to the peptidase S11 family.

It localises to the cell inner membrane. The catalysed reaction is Preferential cleavage: (Ac)2-L-Lys-D-Ala-|-D-Ala. Also transpeptidation of peptidyl-alanyl moieties that are N-acyl substituents of D-alanine.. Its pathway is cell wall biogenesis; peptidoglycan biosynthesis. Its function is as follows. Removes C-terminal D-alanyl residues from sugar-peptide cell wall precursors. The chain is D-alanyl-D-alanine carboxypeptidase DacD (dacD) from Escherichia coli (strain K12).